The primary structure comprises 396 residues: Formate-dependent phosphoribosylglycinamide formyltransferase (396 aa).

Residues glutamate 25 to leucine 26 and glutamate 85 each bind N(1)-(5-phospho-beta-D-ribosyl)glycinamide. ATP is bound by residues arginine 117, lysine 158, serine 163–glutamine 168, glutamate 198–isoleucine 201, and glutamate 206. The 190-residue stretch at arginine 122–leucine 311 folds into the ATP-grasp domain. Residues glutamate 270 and glutamate 282 each coordinate Mg(2+). N(1)-(5-phospho-beta-D-ribosyl)glycinamide is bound by residues aspartate 289, lysine 359, and arginine 366–arginine 367.

Belongs to the PurK/PurT family. As to quaternary structure, homodimer.

It catalyses the reaction N(1)-(5-phospho-beta-D-ribosyl)glycinamide + formate + ATP = N(2)-formyl-N(1)-(5-phospho-beta-D-ribosyl)glycinamide + ADP + phosphate + H(+). Its pathway is purine metabolism; IMP biosynthesis via de novo pathway; N(2)-formyl-N(1)-(5-phospho-D-ribosyl)glycinamide from N(1)-(5-phospho-D-ribosyl)glycinamide (formate route): step 1/1. In terms of biological role, involved in the de novo purine biosynthesis. Catalyzes the transfer of formate to 5-phospho-ribosyl-glycinamide (GAR), producing 5-phospho-ribosyl-N-formylglycinamide (FGAR). Formate is provided by PurU via hydrolysis of 10-formyl-tetrahydrofolate. The protein is Formate-dependent phosphoribosylglycinamide formyltransferase of Shewanella frigidimarina (strain NCIMB 400).